A 228-amino-acid polypeptide reads, in one-letter code: Translin (228 aa).

Positions 86–90 (RFHEH) are DNA/RNA binding. A leucine-zipper region spans residues 177 to 198 (LDSGFRLLNLKNDSLRKRYDGL). Lys187 bears the N6-acetyllysine mark. Position 190 is a phosphoserine (Ser190). Lys199 carries the N6-acetyllysine modification.

Belongs to the translin family. In terms of assembly, ring-shaped heterooctamer of six TSN and two TSNAX subunits, DNA/RNA binding occurs inside the ring.

The protein localises to the cytoplasm. It is found in the nucleus. DNA-binding protein that specifically recognizes consensus sequences at the breakpoint junctions in chromosomal translocations, mostly involving immunoglobulin (Ig)/T-cell receptor gene segments. Seems to recognize single-stranded DNA ends generated by staggered breaks occurring at recombination hot spots. Functionally, exhibits both single-stranded and double-stranded endoribonuclease activity. May act as an activator of RNA-induced silencing complex (RISC) by facilitating endonucleolytic cleavage of the siRNA passenger strand. The sequence is that of Translin (TSN) from Cricetulus griseus (Chinese hamster).